The following is a 382-amino-acid chain: uncharacterized protein (382 aa).

Transmembrane regions (helical) follow at residues 8-28, 41-61, 73-93, 94-114, 133-153, 157-177, 208-228, 274-294, 325-345, and 349-369; these read VLLL…LNTL, WQVG…TLIA, SYHC…LTVD, FWSW…IWVI, AAYM…LGIV, LLSV…PLLF, GCII…LYLS, VVIL…ALFI, ALLM…SLLM, and SDNL…MMLL.

Belongs to the major facilitator superfamily. YcaD (TC 2.A.1.26) family.

Its subcellular location is the cell inner membrane. This is an uncharacterized protein from Yersinia pseudotuberculosis serotype O:3 (strain YPIII).